The chain runs to 319 residues: Acetyl-coenzyme A carboxylase carboxyl transferase subunit alpha (319 aa).

One can recognise a CoA carboxyltransferase C-terminal domain in the interval 35–296; it reads DLDKEIEQLE…KATLLRQLAE (262 aa).

This sequence belongs to the AccA family. As to quaternary structure, acetyl-CoA carboxylase is a heterohexamer composed of biotin carboxyl carrier protein (AccB), biotin carboxylase (AccC) and two subunits each of ACCase subunit alpha (AccA) and ACCase subunit beta (AccD).

The protein resides in the cytoplasm. The enzyme catalyses N(6)-carboxybiotinyl-L-lysyl-[protein] + acetyl-CoA = N(6)-biotinyl-L-lysyl-[protein] + malonyl-CoA. It participates in lipid metabolism; malonyl-CoA biosynthesis; malonyl-CoA from acetyl-CoA: step 1/1. Component of the acetyl coenzyme A carboxylase (ACC) complex. First, biotin carboxylase catalyzes the carboxylation of biotin on its carrier protein (BCCP) and then the CO(2) group is transferred by the carboxyltransferase to acetyl-CoA to form malonyl-CoA. The sequence is that of Acetyl-coenzyme A carboxylase carboxyl transferase subunit alpha from Vibrio vulnificus (strain CMCP6).